A 411-amino-acid chain; its full sequence is Citrate synthase (411 aa).

Catalysis depends on residues His304 and Asp363.

This sequence belongs to the citrate synthase family.

It carries out the reaction oxaloacetate + acetyl-CoA + H2O = citrate + CoA + H(+). It functions in the pathway carbohydrate metabolism; tricarboxylic acid cycle; isocitrate from oxaloacetate: step 1/2. The protein is Citrate synthase (gltA) of Rickettsia helvetica.